A 348-amino-acid chain; its full sequence is Isopentenyl-diphosphate delta-isomerase (348 aa).

14-15 (RK) serves as a coordination point for substrate. Residues Ser-72, 73–75 (SMT), Ser-103, and Asn-131 each bind FMN. 103-105 (SQR) lines the substrate pocket. Gln-166 provides a ligand contact to substrate. Glu-167 is a binding site for Mg(2+). Residues Lys-198, Thr-228, 278 to 280 (GIR), and 299 to 300 (AR) contribute to the FMN site.

Belongs to the IPP isomerase type 2 family. As to quaternary structure, homooctamer. Dimer of tetramers. FMN is required as a cofactor. It depends on NADPH as a cofactor. Requires Mg(2+) as cofactor.

It is found in the cytoplasm. It carries out the reaction isopentenyl diphosphate = dimethylallyl diphosphate. Its function is as follows. Involved in the biosynthesis of isoprenoids. Catalyzes the 1,3-allylic rearrangement of the homoallylic substrate isopentenyl (IPP) to its allylic isomer, dimethylallyl diphosphate (DMAPP). The sequence is that of Isopentenyl-diphosphate delta-isomerase from Synechococcus sp. (strain ATCC 27144 / PCC 6301 / SAUG 1402/1) (Anacystis nidulans).